Reading from the N-terminus, the 129-residue chain is Large ribosomal subunit protein bL32m (129 aa).

The transit peptide at 1-63 directs the protein to the mitochondrion; sequence MAAMTAAAAA…LEDIWEGILR (63 aa). Zn(2+) contacts are provided by Cys94, Cys97, Cys107, and Cys110.

The protein belongs to the bacterial ribosomal protein bL32 family. As to quaternary structure, component of the mitochondrial large ribosomal subunit (mt-LSU). Mature N.crassa 74S mitochondrial ribosomes consist of a small (37S) and a large (54S) subunit. The 37S small subunit contains a 16S ribosomal RNA (16S mt-rRNA) and 32 different proteins. The 54S large subunit contains a 23S rRNA (23S mt-rRNA) and 42 different proteins. bL32m has a zinc binding site. Post-translationally, MRPL32 precursor is processed by the m-AAA protease (composed of YTA12/RCA1 and YTA10/AFG3), which cleaves the N-terminal transit peptide. Cleavage by the m-AAA protease takes place prior to assembly into the large subunit, an essential step for mitochondrial ribosome (mitoribosome) assembly. Proper processing by the m-AAA protease is dependent on the zinc-binding region within the tightly folded C-terminal domain of MRPL32: zinc-dependent folding halts degradation initiated from the N-terminus and triggers the release of mature MRPL32.

Its subcellular location is the mitochondrion. Component of the mitochondrial ribosome (mitoribosome), a dedicated translation machinery responsible for the synthesis of mitochondrial genome-encoded proteins, including at least some of the essential transmembrane subunits of the mitochondrial respiratory chain. The mitoribosomes are attached to the mitochondrial inner membrane and translation products are cotranslationally integrated into the membrane. The sequence is that of Large ribosomal subunit protein bL32m (mrpl32) from Neurospora crassa (strain ATCC 24698 / 74-OR23-1A / CBS 708.71 / DSM 1257 / FGSC 987).